The following is a 976-amino-acid chain: LRR receptor-like serine/threonine-protein kinase ERECTA (976 aa).

An N-terminal signal peptide occupies residues 1–24 (MALFRDIVLLGFLFCLSLVATVTS). Over 25–580 (EEGATLLEIK…RRTVRVSISR (556 aa)) the chain is Extracellular. N-linked (GlcNAc...) asparagine glycans are attached at residues asparagine 65 and asparagine 74. LRR repeat units follow at residues 69-92 (NVVA…GDLK), 93-115 (SLLS…IGDC), 117-140 (SLQN…SKLK), 141-163 (QLEQ…LSQI), 165-187 (NLKI…IYWN), 189-212 (VLQY…CQLT), 213-235 (GLWY…IGNC), 237-259 (AFQV…IGFL), 260-282 (QVAT…IGLM), 284-306 (ALAV…LGNL), 308-330 (FTEK…LGNM), 332-355 (KLHY…GKLT), 356-379 (DLFD…SSCT), 380-401 (NLNS…AFQK), 404-425 (SMTY…ELSR), 428-449 (NLDT…SLGD), 452-473 (HLLK…DFGN), 476-498 (SIME…LNQL), 500-522 (NIIL…ANCL), and 523-545 (SLTV…NNFS). Asparagine 221 and asparagine 234 each carry an N-linked (GlcNAc...) asparagine glycan. Residues asparagine 305 and asparagine 329 are each glycosylated (N-linked (GlcNAc...) asparagine). An N-linked (GlcNAc...) asparagine glycan is attached at asparagine 409. The N-linked (GlcNAc...) asparagine glycan is linked to asparagine 457. 3 N-linked (GlcNAc...) asparagine glycosylation sites follow: asparagine 510, asparagine 528, and asparagine 543. A helical transmembrane segment spans residues 581–601 (AAILGIAIGGLVILLMVLIAA). Residues 602 to 976 (CRPHNPPPFL…FGQVISQNSE (375 aa)) are Cytoplasmic-facing. At threonine 645 the chain carries Phosphothreonine. The Protein kinase domain occupies 648-918 (LSEKYIIGHG…QVTRVLGSFM (271 aa)). ATP contacts are provided by residues 654–662 (IGHGASSTV) and lysine 676. 2 positions are modified to phosphotyrosine: tyrosine 721 and tyrosine 760. Catalysis depends on aspartate 773, which acts as the Proton acceptor. Tyrosine 815 carries the phosphotyrosine modification. At threonine 823 the chain carries Phosphothreonine.

This sequence belongs to the protein kinase superfamily. Ser/Thr protein kinase family. In terms of assembly, homodimer and heterodimer with ERL1 and TMM. Interacts with EPF1, EPF2, EPFL4, EPFL5 and EPFL6. Interacts with SERK1, SERK2, SERK3/BAK1 and SERK4 in a EPF2-induced manner. Interacts with EPFL9/STOMAGEN. Mostly expressed in shoot apical meristems (SAM), organ primordia, flowers, siliques and young rosette leaves, and, to a lower extent, in stems and cauline leaves. Expressed in growing inflorescence stems and pedicels. Detected in epidermis, phloem and xylem.

It is found in the cell membrane. The enzyme catalyses L-seryl-[protein] + ATP = O-phospho-L-seryl-[protein] + ADP + H(+). The catalysed reaction is L-threonyl-[protein] + ATP = O-phospho-L-threonyl-[protein] + ADP + H(+). Its function is as follows. Receptor kinase that, together with ERL1 and ERL2, regulates aerial architecture, including inflorescence (e.g. shoot apical meristem-originating organ shape, elongation of the internode and pedicels, and adaxial-abaxial polarity), and stomatal patterning (e.g. density and clustering), probably by tuning cell division and expansion. Redundantly involved with ERL1 in procambial development regulation. Forms a functional ligand-receptor pair with EPF2 (AC Q8LC53). Modulates plant transpiration efficiency by controlling stomatal density, leaf photosynthetic capacity, epidermal cell expansion, mesophyll cell proliferation and cell-cell contact. A phloem-specific expression of ER is sufficient for proper inflorescence architecture. Probable major trait regulating canalization (maintenance of phenotype despite varying environment) in many aspect of the plant physiology (e.g. plant morphology, light-dependent leaves number, branch number, flowering time, phytate and mineral concentrations) by transducing microenvironmental variation into phenotypic differentiation (ecological amplifier). May maintain development integrity in heat stress conditions. Regulates cell wall composition and structure. Confers resistance to the pathogenic bacteria Ralstonia solanacearum and to the necrotrophic fungi Plectosphaerella cucumerina and Pythium irregulare, and required for callose deposition upon infection. Resistance to P.cucumerina seems cell wall-mediated. Forms a constitutive complex with TMM involved in the recognition of the stomatal regulatory peptides EPF1, EPF2 and EPFL9/STOMAGEN. The polypeptide is LRR receptor-like serine/threonine-protein kinase ERECTA (Arabidopsis thaliana (Mouse-ear cress)).